Reading from the N-terminus, the 450-residue chain is Probable cysteine protease ATG4 (450 aa).

The active-site Nucleophile is the Cys-122. Active-site residues include Asp-297 and His-299.

This sequence belongs to the peptidase C54 family.

The protein resides in the cytoplasm. The protein localises to the nucleus. It localises to the preautophagosomal structure. The catalysed reaction is [protein]-C-terminal L-amino acid-glycyl-phosphatidylethanolamide + H2O = [protein]-C-terminal L-amino acid-glycine + a 1,2-diacyl-sn-glycero-3-phosphoethanolamine. Its function is as follows. Cysteine protease that plays a key role in cytoplasm to vacuole transport (Cvt) and autophagy by mediating both proteolytic activation and delipidation of ATG8. Required for selective autophagic degradation of the nucleus (nucleophagy) as well as for mitophagy which contributes to regulate mitochondrial quantity and quality by eliminating the mitochondria to a basal level to fulfill cellular energy requirements and preventing excess ROS production. The protease activity is required for proteolytic activation of ATG8: cleaves the C-terminal amino acid of ATG8 to reveal a C-terminal glycine. ATG8 ubiquitin-like activity requires the exposure of the glycine at the C-terminus for its conjugation to phosphatidylethanolamine (PE) and its insertion to membranes, which is necessary for autophagy. The ATG8-PE conjugate mediates tethering between adjacent membranes and stimulates membrane hemifusion, leading to expansion of the autophagosomal membrane during autophagy. In addition to the protease activity, also catalyzes deconjugation of PE-conjugated forms of ATG8 during macroautophagy: ATG8 delipidation is required to release the protein from membranes, which facilitates multiple events during macroautophagy, and especially for efficient autophagosome biogenesis, the assembly of ATG9-containing tubulovesicular clusters into phagophores/autophagosomes, and for the disassembly of PAS-associated ATG components. ATG8 delipidation by ATG4 also recycles ATG8-PE generated on inappropriate membranes to maintain a reservoir of unlipidated ATG8 that is required for autophagosome formation at the PAS. The sequence is that of Probable cysteine protease ATG4 (ATG4) from Kluyveromyces lactis (strain ATCC 8585 / CBS 2359 / DSM 70799 / NBRC 1267 / NRRL Y-1140 / WM37) (Yeast).